Here is a 996-residue protein sequence, read N- to C-terminus: MSLSNLSSSNSNGAFLDYGEFRSGVYIQTSNQILYFTDENGNKVGYQWKGLLPHTTTTNDPSTDGGISDTAWCSIVGSGFIEKLSKEGIDLSWKAHLPTVEVSYNLPHKSLKIWEEGTNSTDNDYWLYPGDGTVWNGIGVLGDIPDAPFKQIVPQNNVIEWSAIATEGQNQFTVPYEFTNISVFINGLLQNKSTGGYVVNGSTVTLNGSLKAGDDIHVVISNIPIKNINYITDVELSQPDAAQKIGLLHGGNIQNLQNFLSFDMFNIDKTGSTDVTSQINNIFSLANQLNIPIKQHDGTYLVSGSTIFTINTDCDLSGVTILPSSNFTGYFLYTQNEQPTTYNSSSSLVTLINSATINANDSILYGLINDTTLDGNAIFMKGNDPLYVARGTTKNWWCNTRISNRGKMDDYLKYGVSGINEVISLPISKKVTTIKLPNWDFINQPANNGVIRFNNISRYRIHGGSVFNRPLNDINKDPVIISINYAYDIILQDFYDEYPSWPLVGGSIAYAYTINFNYINRVTFKDINSQGYGWGIVGGQLATNITYLRCNINRVDMHDPFMGYLKILDCDLGYYGVSATGMGDMYIERTTFNIDDLAFNGWREVDGIINTRPDFGGWFDGGVYIKDITIIGDASKFREINNRGVSLFSAYSYNATLSYIPNGSPVEPWGFKEIIVNGLRCTKPITGKRFSSLVYAASVQNVDYFPRHVKFNNCDFNSSDVECIDLHGWKITPDNSSKTSISNTMNFKSTNFIEFTDCSFVGLEILRPYSSYDYMNLELKLNNCKYIGSNISPISFYTDQVGNYEFTNCDINFISDTTKSTSSLSNRQSSFVINGGQINSVSVPFSILYNSGYSTPVLVNNTIFKGSFSQSSVTSINLNVAEFAQLSNCRFYSNVNNSYISPALWLGSTSNSATSITVMRGNKINTVITNTTTVSGISIKTDIIPFGVASGHINGSFYVDATGTTGTYQLYLNSLNLKSQIGKIVSNGTISGIYLQ.

The protein resides in the virion. Functionally, functions as a receptor binding protein (RBP) and probably mediates the attachment to the host capsular exopolysaccharides. Displays a depolymerase activity that specifically degrades the K64-type polysaccharides of Klebsiella pneumoniae capsule. The polypeptide is Depolymerase, capsule K64-specific (Klebsiella (Bacteriophage K64-1)).